The primary structure comprises 580 residues: Phosphomethylpyrimidine synthase (580 aa).

A disordered region spans residues 1-58 (MTPTQNEIHPKHSYSPIRKHGLEVPETEIALDDSPSGPNEPFRIYRTRGPETDPTLGL). Residues Asn-180, Met-209, Tyr-238, His-274, 294–296 (SRG), 335–338 (DGLR), and Glu-374 contribute to the substrate site. His-378 provides a ligand contact to Zn(2+). Tyr-401 is a binding site for substrate. His-442 contributes to the Zn(2+) binding site. 3 residues coordinate [4Fe-4S] cluster: Cys-522, Cys-525, and Cys-530. The interval 554–580 (VGASDSTEGMKEKSREFVAGGGEVYRE) is disordered.

This sequence belongs to the ThiC family. [4Fe-4S] cluster serves as cofactor.

It carries out the reaction 5-amino-1-(5-phospho-beta-D-ribosyl)imidazole + S-adenosyl-L-methionine = 4-amino-2-methyl-5-(phosphooxymethyl)pyrimidine + CO + 5'-deoxyadenosine + formate + L-methionine + 3 H(+). The protein operates within cofactor biosynthesis; thiamine diphosphate biosynthesis. Functionally, catalyzes the synthesis of the hydroxymethylpyrimidine phosphate (HMP-P) moiety of thiamine from aminoimidazole ribotide (AIR) in a radical S-adenosyl-L-methionine (SAM)-dependent reaction. The chain is Phosphomethylpyrimidine synthase from Corynebacterium efficiens (strain DSM 44549 / YS-314 / AJ 12310 / JCM 11189 / NBRC 100395).